The sequence spans 658 residues: UvrABC system protein B (658 aa).

The region spanning 25–416 (KSLKNNNHYQ…QKNVAEQIIR (392 aa)) is the Helicase ATP-binding domain. 38-45 (GVTGSGKT) is an ATP binding site. The Beta-hairpin signature appears at 91-114 (HFDYYQPESYIPRRDLFIEKDSSI). The Helicase C-terminal domain maps to 433-607 (QVQDLFDEIK…ELKLRDDEIK (175 aa)). Positions 623 to 658 (EKIIKELDKKMRERAKNLDFEEAMRLRDEIAQLRTL) constitute a UVR domain.

It belongs to the UvrB family. In terms of assembly, forms a heterotetramer with UvrA during the search for lesions. Interacts with UvrC in an incision complex.

The protein resides in the cytoplasm. Its function is as follows. The UvrABC repair system catalyzes the recognition and processing of DNA lesions. A damage recognition complex composed of 2 UvrA and 2 UvrB subunits scans DNA for abnormalities. Upon binding of the UvrA(2)B(2) complex to a putative damaged site, the DNA wraps around one UvrB monomer. DNA wrap is dependent on ATP binding by UvrB and probably causes local melting of the DNA helix, facilitating insertion of UvrB beta-hairpin between the DNA strands. Then UvrB probes one DNA strand for the presence of a lesion. If a lesion is found the UvrA subunits dissociate and the UvrB-DNA preincision complex is formed. This complex is subsequently bound by UvrC and the second UvrB is released. If no lesion is found, the DNA wraps around the other UvrB subunit that will check the other stand for damage. The sequence is that of UvrABC system protein B from Helicobacter pylori (strain J99 / ATCC 700824) (Campylobacter pylori J99).